The following is a 383-amino-acid chain: Acetylornithine deacetylase (383 aa).

His80 contacts Zn(2+). The active site involves Asp82. Residue Asp112 participates in Zn(2+) binding. Glu144 is an active-site residue. Zn(2+) contacts are provided by Glu145, Glu169, and His355.

It belongs to the peptidase M20A family. ArgE subfamily. Homodimer. Requires Zn(2+) as cofactor. Co(2+) serves as cofactor. It depends on glutathione as a cofactor.

The protein localises to the cytoplasm. The catalysed reaction is N(2)-acetyl-L-ornithine + H2O = L-ornithine + acetate. The protein operates within amino-acid biosynthesis; L-arginine biosynthesis; L-ornithine from N(2)-acetyl-L-ornithine (linear): step 1/1. Functionally, catalyzes the hydrolysis of the amide bond of N(2)-acetylated L-amino acids. Cleaves the acetyl group from N-acetyl-L-ornithine to form L-ornithine, an intermediate in L-arginine biosynthesis pathway, and a branchpoint in the synthesis of polyamines. The sequence is that of Acetylornithine deacetylase from Escherichia coli O157:H7.